The following is a 107-amino-acid chain: MVNFNQFLKQAQTMQKKMQEAQEQMANTRYTGKAGGGLVEIIATGKGEVEKVSIDASLLKEEEKEMLEDLIKVAFNDAKQKCDSDSQNSMSGALSGMSLPPGFKMPF.

The interval 81-107 (KCDSDSQNSMSGALSGMSLPPGFKMPF) is disordered.

This sequence belongs to the YbaB/EbfC family. As to quaternary structure, homodimer.

It is found in the cytoplasm. The protein resides in the nucleoid. Binds to DNA and alters its conformation. May be involved in regulation of gene expression, nucleoid organization and DNA protection. In Rickettsia bellii (strain OSU 85-389), this protein is Nucleoid-associated protein A1I_00660.